Consider the following 809-residue polypeptide: Cell division control protein 48 homolog A (809 aa).

Residue Ser2 is modified to N-acetylserine. Ser41 is subject to Phosphoserine. Residues Gly210, 248–256, and His387 contribute to the ADP site; that span reads GPPGSGKTL. 521-529 is an ATP binding site; it reads GPPGCGKTL. The interval 782–809 is disordered; sequence AGSGATTGVADPFATSAAAAGDDDDLYN. Low complexity predominate over residues 791-801; the sequence is ADPFATSAAAA.

It belongs to the AAA ATPase family. As to quaternary structure, homohexamer. Interacts with SERK1, GRF6, KAPP and SYP31, but not with KNOLLE. Component of the SERK1 signaling complex, composed of KAPP, CDC48A, GRF6 or GRF7, SERK1, SERK2, SERK3/BAK1 and BRI1. Interacts with PUX1, PUX2, PUX3, PUX4, PUX5, PUX7 and PUX11 via its N-terminus. Post-translationally, phosphorylated on at least one threonine residue and on Ser-41 by SERK1.

Its subcellular location is the nucleus. The protein localises to the cytoplasm. It localises to the cytoskeleton. The protein resides in the phragmoplast. It is found in the cell membrane. Its function is as follows. Probably functions in cell division and growth processes. Interacts with certain SNAREs as part of specialized membrane fusion events where vesicles from the same organelle fuse (homotypic fusion). This Arabidopsis thaliana (Mouse-ear cress) protein is Cell division control protein 48 homolog A (CDC48A).